A 116-amino-acid chain; its full sequence is Large ribosomal subunit protein bL17 (116 aa).

Belongs to the bacterial ribosomal protein bL17 family. Part of the 50S ribosomal subunit. Contacts protein L32.

The sequence is that of Large ribosomal subunit protein bL17 from Synechococcus elongatus (strain ATCC 33912 / PCC 7942 / FACHB-805) (Anacystis nidulans R2).